A 323-amino-acid chain; its full sequence is Serine/threonine-protein phosphatase PP1-gamma catalytic subunit B (323 aa).

Mn(2+) is bound by residues Asp64, His66, Asp92, and Asn124. His125 serves as the catalytic Proton donor. Mn(2+) contacts are provided by His173 and His248. The disordered stretch occupies residues 301–323 (KKKPNASRPVTPPRGIITKQAKK).

Belongs to the PPP phosphatase family. PP-1 subfamily. In terms of assembly, PP1 comprises a catalytic subunit, ppp1c1, ppp1cb or ppp1cc, which is folded into its native form by inhibitor 2 and glycogen synthetase kinase 3, and then is complexed to one or several targeting or regulatory subunits. The cofactor is Mn(2+).

The protein resides in the cytoplasm. The protein localises to the nucleus. Its subcellular location is the cleavage furrow. It localises to the nucleolus. It is found in the nucleoplasm. The protein resides in the chromosome. The protein localises to the centromere. Its subcellular location is the kinetochore. It localises to the nucleus speckle. It is found in the midbody. The protein resides in the mitochondrion. The enzyme catalyses O-phospho-L-seryl-[protein] + H2O = L-seryl-[protein] + phosphate. It carries out the reaction O-phospho-L-threonyl-[protein] + H2O = L-threonyl-[protein] + phosphate. Its function is as follows. Protein phosphatase that associates with over 200 regulatory proteins to form highly specific holoenzymes which dephosphorylate hundreds of biological targets. Protein phosphatase 1 (PP1) is essential for cell division, and participates in the regulation of glycogen metabolism, muscle contractility and protein synthesis. Promotes nuclear envelope reassembly by targeting nuclear membrane vesicles to chromatin at the end of mitosis. Acts by dephosphorylating membrane proteins such as lamin B receptor (lbr) to regulate the binding of membrane proteins to chromatin. In Xenopus laevis (African clawed frog), this protein is Serine/threonine-protein phosphatase PP1-gamma catalytic subunit B (ppp1cc-b).